The chain runs to 234 residues: Probable chemoreceptor glutamine deamidase CheD (234 aa).

This sequence belongs to the CheD family.

It catalyses the reaction L-glutaminyl-[protein] + H2O = L-glutamyl-[protein] + NH4(+). In terms of biological role, probably deamidates glutamine residues to glutamate on methyl-accepting chemotaxis receptors (MCPs), playing an important role in chemotaxis. This chain is Probable chemoreceptor glutamine deamidase CheD, found in Burkholderia mallei (strain NCTC 10247).